A 456-amino-acid chain; its full sequence is MSNTYSLVNPFDNSPLGEYEYTPWATLENQLAMLKEGQLSQRKTAAFQRAGVLNKLAALLKEHSEEMATLITQETGKTILDSRVEMMRAYNAAIASAEEARQIQGESLDSDAYAPAGGKIGVVCWKPLGTILCITPFNFPINIAIHKIGPAYAAGNTILFKPGPQNTASAQLLVKLCYEAGMPENTLQLCMPEFSDLDRLNAHPDVNAINFTGGTAAANAISAAAGYKKLLLELGGNDPLIVMDDGDLEAATTAAINHRFATAGQRCTAAKRLFIHANVYEAFRDLLVEKSSKLVVGDPMKDDTFVGPVINQGAADQIRTLIEQAIEDGASVALGNQYEGAFVYPTILENVSPTSEIMVEEAFGPVMPLYKFESVEEIIPIINNTAYGLQAGVFSQNLATIKELYEQLDVGTLAANDGPGFRTEHFPFGGVKESGIGREGIKYAIREMSYTKTLVI.

213–218 (GGTAAA) is a binding site for NAD(+). Residues Glu-233 and Cys-267 contribute to the active site.

This sequence belongs to the aldehyde dehydrogenase family. As to quaternary structure, homotetramer.

It carries out the reaction sulfoacetaldehyde + NAD(+) + H2O = sulfoacetate + NADH + 2 H(+). In terms of biological role, mediates conversion of 2-sulfoacetaldehyde into sulfoacetate. The enzyme is specific for NAD; NADP is not a substrate. Part of a pathway that can utilize the amino group of taurine as a sole source of nitrogen for growth. The protein is Sulfoacetaldehyde dehydrogenase (safD) of Neptuniibacter caesariensis.